A 35-amino-acid chain; its full sequence is MEALVYTFLLVGTLGIIFFAIFFREPPRVPVKDKK.

Residues 3–23 (ALVYTFLLVGTLGIIFFAIFF) form a helical membrane-spanning segment.

The protein belongs to the PsbT family. In terms of assembly, PSII is composed of 1 copy each of membrane proteins PsbA, PsbB, PsbC, PsbD, PsbE, PsbF, PsbH, PsbI, PsbJ, PsbK, PsbL, PsbM, PsbT, PsbY, PsbZ, Psb30/Ycf12, at least 3 peripheral proteins of the oxygen-evolving complex and a large number of cofactors. It forms dimeric complexes.

The protein resides in the plastid. The protein localises to the chloroplast thylakoid membrane. Its function is as follows. Found at the monomer-monomer interface of the photosystem II (PS II) dimer, plays a role in assembly and dimerization of PSII. PSII is a light-driven water plastoquinone oxidoreductase, using light energy to abstract electrons from H(2)O, generating a proton gradient subsequently used for ATP formation. In Chaetosphaeridium globosum (Charophycean green alga), this protein is Photosystem II reaction center protein T.